A 181-amino-acid polypeptide reads, in one-letter code: UPF0232 protein SAV_4320 (181 aa).

A compositionally biased stretch (polar residues) spans 1–10 (MSDTPAQTPE). Disordered regions lie at residues 1–64 (MSDT…GRDP) and 156–181 (QGPG…DTYG). Over residues 30-39 (AAKEQARARG) the composition is skewed to basic and acidic residues.

Belongs to the UPF0232 family.

The polypeptide is UPF0232 protein SAV_4320 (Streptomyces avermitilis (strain ATCC 31267 / DSM 46492 / JCM 5070 / NBRC 14893 / NCIMB 12804 / NRRL 8165 / MA-4680)).